Here is a 215-residue protein sequence, read N- to C-terminus: Pyridoxine/pyridoxamine 5'-phosphate oxidase (215 aa).

Residues 9 to 12 and K67 contribute to the substrate site; that span reads RRDY. FMN-binding positions include 62-67, 77-78, K84, and Q106; these read RVVLLK and FT. Y124, R128, and S132 together coordinate substrate. FMN contacts are provided by residues 141–142 and W186; that span reads QS. 192–194 serves as a coordination point for substrate; the sequence is RLH. R196 is a binding site for FMN.

Belongs to the pyridoxamine 5'-phosphate oxidase family. As to quaternary structure, homodimer. Requires FMN as cofactor.

The catalysed reaction is pyridoxamine 5'-phosphate + O2 + H2O = pyridoxal 5'-phosphate + H2O2 + NH4(+). The enzyme catalyses pyridoxine 5'-phosphate + O2 = pyridoxal 5'-phosphate + H2O2. The protein operates within cofactor metabolism; pyridoxal 5'-phosphate salvage; pyridoxal 5'-phosphate from pyridoxamine 5'-phosphate: step 1/1. Its pathway is cofactor metabolism; pyridoxal 5'-phosphate salvage; pyridoxal 5'-phosphate from pyridoxine 5'-phosphate: step 1/1. Catalyzes the oxidation of either pyridoxine 5'-phosphate (PNP) or pyridoxamine 5'-phosphate (PMP) into pyridoxal 5'-phosphate (PLP). This is Pyridoxine/pyridoxamine 5'-phosphate oxidase from Chromohalobacter salexigens (strain ATCC BAA-138 / DSM 3043 / CIP 106854 / NCIMB 13768 / 1H11).